The following is a 403-amino-acid chain: 4-hydroxy-3-methylbut-2-enyl diphosphate reductase (403 aa).

Cysteine 66 contributes to the [4Fe-4S] cluster binding site. Residue histidine 96 participates in (2E)-4-hydroxy-3-methylbut-2-enyl diphosphate binding. A dimethylallyl diphosphate-binding site is contributed by histidine 96. Isopentenyl diphosphate is bound at residue histidine 96. A [4Fe-4S] cluster-binding site is contributed by cysteine 157. A (2E)-4-hydroxy-3-methylbut-2-enyl diphosphate-binding site is contributed by histidine 185. Histidine 185 provides a ligand contact to dimethylallyl diphosphate. Isopentenyl diphosphate is bound at residue histidine 185. The Proton donor role is filled by glutamate 187. Threonine 250 contributes to the (2E)-4-hydroxy-3-methylbut-2-enyl diphosphate binding site. Cysteine 288 contacts [4Fe-4S] cluster. Serine 317, serine 318, asparagine 319, and serine 379 together coordinate (2E)-4-hydroxy-3-methylbut-2-enyl diphosphate. Dimethylallyl diphosphate is bound by residues serine 317, serine 318, asparagine 319, and serine 379. Residues serine 317, serine 318, asparagine 319, and serine 379 each coordinate isopentenyl diphosphate.

Belongs to the IspH family. Requires [4Fe-4S] cluster as cofactor.

The enzyme catalyses isopentenyl diphosphate + 2 oxidized [2Fe-2S]-[ferredoxin] + H2O = (2E)-4-hydroxy-3-methylbut-2-enyl diphosphate + 2 reduced [2Fe-2S]-[ferredoxin] + 2 H(+). It carries out the reaction dimethylallyl diphosphate + 2 oxidized [2Fe-2S]-[ferredoxin] + H2O = (2E)-4-hydroxy-3-methylbut-2-enyl diphosphate + 2 reduced [2Fe-2S]-[ferredoxin] + 2 H(+). Its pathway is isoprenoid biosynthesis; dimethylallyl diphosphate biosynthesis; dimethylallyl diphosphate from (2E)-4-hydroxy-3-methylbutenyl diphosphate: step 1/1. It participates in isoprenoid biosynthesis; isopentenyl diphosphate biosynthesis via DXP pathway; isopentenyl diphosphate from 1-deoxy-D-xylulose 5-phosphate: step 6/6. Catalyzes the conversion of 1-hydroxy-2-methyl-2-(E)-butenyl 4-diphosphate (HMBPP) into a mixture of isopentenyl diphosphate (IPP) and dimethylallyl diphosphate (DMAPP). Acts in the terminal step of the DOXP/MEP pathway for isoprenoid precursor biosynthesis. In Rippkaea orientalis (strain PCC 8801 / RF-1) (Cyanothece sp. (strain PCC 8801)), this protein is 4-hydroxy-3-methylbut-2-enyl diphosphate reductase.